The sequence spans 392 residues: N-acyl-phosphatidylethanolamine-hydrolyzing phospholipase D (392 aa).

The residue at position 1 (methionine 1) is an N-acetylmethionine. Positions 1-16 (MDENETNQLLMTSNQY) are enriched in polar residues. The disordered stretch occupies residues 1-39 (MDENETNQLLMTSNQYPKEAVRKRQNSRNSGGSDSSRFS). Positions 27 to 36 (SRNSGGSDSS) are enriched in low complexity. 2 residues coordinate Zn(2+): histidine 183 and histidine 185. Tyrosine 186 is an an N-acyl-1,2-diacyl-sn-glycero-3-phosphoethanolamine binding site. Aspartate 187, histidine 188, and histidine 251 together coordinate Zn(2+). Residues lysine 254 and methionine 258 each contribute to the deoxycholate site. Residue aspartate 282 coordinates Zn(2+). Histidine 319 is a binding site for an N-acyl-1,2-diacyl-sn-glycero-3-phosphoethanolamine. Residue histidine 341 participates in Zn(2+) binding. Alanine 346 provides a ligand contact to deoxycholate.

This sequence belongs to the NAPE-PLD family. Homodimer. Bile acids promote the assembly of inactive monomers into an active dimer and enable catalysis. Requires Zn(2+) as cofactor. In terms of tissue distribution, widely expressed. Highest expression in brain, kidney and testis (at protein level). Expressed in adipose tissue (at protein level).

It is found in the golgi apparatus membrane. The protein localises to the early endosome membrane. The protein resides in the nucleus envelope. It localises to the nucleus. Its subcellular location is the nucleoplasm. It carries out the reaction an N-acyl-1,2-diacyl-sn-glycero-3-phosphoethanolamine + H2O = an N-acylethanolamine + a 1,2-diacyl-sn-glycero-3-phosphate + H(+). The catalysed reaction is N-butanoyl-1-hexadecanoyl-2-(9Z,12Z-octadecadienoyl)-sn-glycero-3-phosphoethanolamine + H2O = N-butanoyl ethanolamine + 1-hexadecanoyl-2-(9Z,12Z-octadecadienoyl)-sn-glycero-3-phosphate + H(+). The enzyme catalyses N-hexanoyl-1-hexadecanoyl-2-(9Z,12Z-octadecadienoyl)-sn-glycero-3-phosphoethanolamine + H2O = N-hexanoyl ethanolamine + 1-hexadecanoyl-2-(9Z,12Z-octadecadienoyl)-sn-glycero-3-phosphate + H(+). It catalyses the reaction N-octanoyl-1-hexadecanoyl-2-(9Z,12Z-octadecadienoyl)-sn-glycero-3-phosphoethanolamine + H2O = N-octanoyl ethanolamine + 1-hexadecanoyl-2-(9Z,12Z-octadecadienoyl)-sn-glycero-3-phosphate + H(+). It carries out the reaction N-decanoyl-1-hexadecanoyl-2-(9Z,12Z-octadecadienoyl)-sn-glycero-3-phosphoethanolamine + H2O = N-decanoyl ethanolamine + 1-hexadecanoyl-2-(9Z,12Z-octadecadienoyl)-sn-glycero-3-phosphate + H(+). The catalysed reaction is N-dodecanoyl-1,2-di-(9Z-octadecenoyl)-sn-glycero-3-phosphoethanolamine + H2O = N-dodecanoylethanolamine + 1,2-di-(9Z-octadecenoyl)-sn-glycero-3-phosphate + H(+). The enzyme catalyses N-tetradecanoyl-1,2-di-(9Z-octadecenoyl)-sn-glycero-3-phosphoethanolamine + H2O = N-tetradecanoylethanolamine + 1,2-di-(9Z-octadecenoyl)-sn-glycero-3-phosphate + H(+). It catalyses the reaction N-hexadecanoyl-1,2-di-(9Z-octadecenoyl)-sn-glycero-3-phosphoethanolamine + H2O = N-hexadecanoylethanolamine + 1,2-di-(9Z-octadecenoyl)-sn-glycero-3-phosphate + H(+). It carries out the reaction N,1-dihexadecanoyl-2-(9Z,12Z-octadecadienoyl)-sn-glycero-3-phosphoethanolamine + H2O = 1-hexadecanoyl-2-(9Z,12Z-octadecadienoyl)-sn-glycero-3-phosphate + N-hexadecanoylethanolamine + H(+). The catalysed reaction is N-octadecanoyl-1,2-di-(9Z-octadecenoyl)-sn-glycero-3-phosphoethanolamine + H2O = N-octadecanoyl ethanolamine + 1,2-di-(9Z-octadecenoyl)-sn-glycero-3-phosphate + H(+). The enzyme catalyses N,1,2-tri-(9Z-octadecenoyl)-sn-glycero-3-phosphoethanolamine + H2O = N-(9Z-octadecenoyl) ethanolamine + 1,2-di-(9Z-octadecenoyl)-sn-glycero-3-phosphate + H(+). It catalyses the reaction N-(5Z,8Z,11Z,14Z-eicosatetraenoyl)-1,2-diacyl-sn-glycero-3-phosphoethanolamine + H2O = N-(5Z,8Z,11Z,14Z-eicosatetraenoyl)-ethanolamine + a 1,2-diacyl-sn-glycero-3-phosphate + H(+). It carries out the reaction N-(5Z,8Z,11Z,14Z-eicosatetraenoyl)-1,2-di-(9Z-octadecenoyl)-sn-glycero-3-phosphoethanolamine + H2O = N-(5Z,8Z,11Z,14Z-eicosatetraenoyl)-ethanolamine + 1,2-di-(9Z-octadecenoyl)-sn-glycero-3-phosphate + H(+). The catalysed reaction is 1-O-(1Z-octadecenoyl)-2-(9Z-octadecenoyl)-sn-glycero-3-phospho-N-hexadecanoyl-ethanolamine + H2O = 1-O-(1Z-octadecenoyl)-2-(9Z-octadecenoyl)-sn-glycero-3-phosphate + N-hexadecanoylethanolamine + H(+). The enzyme catalyses N,1-diacyl-sn-glycero-3-phosphoethanolamine + H2O = an N-acylethanolamine + a 1-acyl-sn-glycero-3-phosphate + H(+). It catalyses the reaction N,1-dihexadecanoyl-sn-glycero-3-phosphoethanolamine + H2O = N-hexadecanoylethanolamine + 1-hexadecanoyl-sn-glycero-3-phosphate + H(+). It carries out the reaction N-(5Z,8Z,11Z,14Z-eicosatetraenoyl)-1-(9Z-octadecenoyl)-sn-glycero-3-phosphoethanolamine + H2O = N-(5Z,8Z,11Z,14Z-eicosatetraenoyl)-ethanolamine + 1-(9Z-octadecenoyl)-sn-glycero-3-phosphate + H(+). Activated by divalent cations. Activated by bile acids. D-type phospholipase that hydrolyzes N-acyl-phosphatidylethanolamines (NAPEs) to produce bioactive N-acylethanolamines/fatty acid ethanolamides (NAEs/FAEs) and phosphatidic acid. Cleaves the terminal phosphodiester bond of diacyl- and alkenylacyl-NAPEs, primarily playing a role in the generation of long-chain saturated and monounsaturated NAEs in the brain. May control NAPE homeostasis in dopaminergic neuron membranes and regulate neuron survival, partly through RAC1 activation. As a regulator of lipid metabolism in the adipose tissue, mediates the crosstalk between adipocytes, gut microbiota and immune cells to control body temperature and weight. In particular, regulates energy homeostasis by promoting cold-induced brown or beige adipocyte differentiation program to generate heat from fatty acids and glucose. Has limited D-type phospholipase activity toward N-acyl lyso-NAPEs. This Bos taurus (Bovine) protein is N-acyl-phosphatidylethanolamine-hydrolyzing phospholipase D (NAPEPLD).